Reading from the N-terminus, the 314-residue chain is L-lactate dehydrogenase 2 (314 aa).

Residues Val16, Asp37, Lys42, Tyr68, and 82–83 (GV) contribute to the NAD(+) site. The substrate site is built by Gln85 and Arg91. Residues Ser104, 121–123 (ASN), and Thr146 contribute to the NAD(+) site. Substrate is bound at residue 123-126 (NPVD). 151–154 (DTTR) provides a ligand contact to substrate. Arg156 and His171 together coordinate beta-D-fructose 1,6-bisphosphate. His178 functions as the Proton acceptor in the catalytic mechanism. At Tyr223 the chain carries Phosphotyrosine. Thr232 lines the substrate pocket.

The protein belongs to the LDH/MDH superfamily. LDH family. In terms of assembly, homotetramer.

Its subcellular location is the cytoplasm. It catalyses the reaction (S)-lactate + NAD(+) = pyruvate + NADH + H(+). It participates in fermentation; pyruvate fermentation to lactate; (S)-lactate from pyruvate: step 1/1. Allosterically activated by fructose 1,6-bisphosphate (FBP). Its function is as follows. Catalyzes the conversion of lactate to pyruvate. The sequence is that of L-lactate dehydrogenase 2 from Lactococcus lactis subsp. lactis (strain IL1403) (Streptococcus lactis).